Consider the following 59-residue polypeptide: Lantipeptide Flvbeta.f (59 aa).

The propeptide at 1-27 (MEKMNNIAGITPENELDEMFDDSVVGA) is cleaved by FlvT. 2,3-didehydrobutyrine; by FlvM2 occurs at positions 31 and 32. 2 cross-links (beta-methyllanthionine (Thr-Cys); by FlvM2) span residues 41-47 (TKNPQIC) and 53-56 (TVKC).

Contains DL-beta-methyllanthionine, when coepressed in E.coli with the flavecin synthetase FlvM2.

Its subcellular location is the secreted. Functionally, lanthionine-containing peptide that does probably not show antibacterial activity, since its analog [+7]Flvbeta.f does not show antibacterial activity against M.luteus. Also does not show antibiotic activity when tested with [Del2]Flvalpha.a, an analog of Flvalpha.a, which is encoded by the same operon than Flvbeta.f. The bactericidal activity of lantibiotics is based on depolarization of energized bacterial cytoplasmic membranes, initiated by the formation of aqueous transmembrane pores. In Ruminococcus flavefaciens, this protein is Lantipeptide Flvbeta.f.